Reading from the N-terminus, the 562-residue chain is Glucose-6-phosphate isomerase (562 aa).

Residue E370 is the Proton donor of the active site. Active-site residues include H401 and K526.

Belongs to the GPI family.

It is found in the cytoplasm. It carries out the reaction alpha-D-glucose 6-phosphate = beta-D-fructose 6-phosphate. It participates in carbohydrate biosynthesis; gluconeogenesis. Its pathway is carbohydrate degradation; glycolysis; D-glyceraldehyde 3-phosphate and glycerone phosphate from D-glucose: step 2/4. Functionally, catalyzes the reversible isomerization of glucose-6-phosphate to fructose-6-phosphate. The polypeptide is Glucose-6-phosphate isomerase (Deinococcus geothermalis (strain DSM 11300 / CIP 105573 / AG-3a)).